A 565-amino-acid chain; its full sequence is uncharacterized protein (565 aa).

A signal peptide spans 1 to 21; sequence MKIPSQQVLLALPLLASPAQS. N-linked (GlcNAc...) asparagine glycosylation is found at Asn-46 and Asn-88. In terms of domain architecture, FAD-binding PCMH-type spans 118 to 302; it reads QGIVPYYSVS…TSVTYKTHPK (185 aa). His-155 bears the Pros-8alpha-FAD histidine mark. Asn-191, Asn-314, Asn-364, Asn-371, and Asn-484 each carry an N-linked (GlcNAc...) asparagine glycan.

Belongs to the oxygen-dependent FAD-linked oxidoreductase family. FAD is required as a cofactor.

Its subcellular location is the secreted. This is an uncharacterized protein from Arthroderma benhamiae (strain ATCC MYA-4681 / CBS 112371) (Trichophyton mentagrophytes).